Here is a 102-residue protein sequence, read N- to C-terminus: Small ribosomal subunit protein uS10 (102 aa).

The protein belongs to the universal ribosomal protein uS10 family. In terms of assembly, part of the 30S ribosomal subunit.

Functionally, involved in the binding of tRNA to the ribosomes. The protein is Small ribosomal subunit protein uS10 of Mycoplasma mycoides subsp. mycoides SC (strain CCUG 32753 / NCTC 10114 / PG1).